The following is a 607-amino-acid chain: Elongation factor 4 (607 aa).

The region spanning 11–193 (EKIRNFSIIA…QIVEKVPAPQ (183 aa)) is the tr-type G domain. GTP is bound by residues 23 to 28 (DHGKST) and 140 to 143 (NKID).

This sequence belongs to the TRAFAC class translation factor GTPase superfamily. Classic translation factor GTPase family. LepA subfamily.

It is found in the cell membrane. It carries out the reaction GTP + H2O = GDP + phosphate + H(+). Functionally, required for accurate and efficient protein synthesis under certain stress conditions. May act as a fidelity factor of the translation reaction, by catalyzing a one-codon backward translocation of tRNAs on improperly translocated ribosomes. Back-translocation proceeds from a post-translocation (POST) complex to a pre-translocation (PRE) complex, thus giving elongation factor G a second chance to translocate the tRNAs correctly. Binds to ribosomes in a GTP-dependent manner. The protein is Elongation factor 4 of Lactococcus lactis subsp. cremoris (strain MG1363).